The following is a 557-amino-acid chain: Formate--tetrahydrofolate ligase (557 aa).

66–73 contacts ATP; the sequence is TPAGEGKT.

The protein belongs to the formate--tetrahydrofolate ligase family.

The enzyme catalyses (6S)-5,6,7,8-tetrahydrofolate + formate + ATP = (6R)-10-formyltetrahydrofolate + ADP + phosphate. It participates in one-carbon metabolism; tetrahydrofolate interconversion. The chain is Formate--tetrahydrofolate ligase from Bartonella tribocorum (strain CIP 105476 / IBS 506).